The chain runs to 226 residues: 2-C-methyl-D-erythritol 4-phosphate cytidylyltransferase (226 aa).

The protein belongs to the IspD/TarI cytidylyltransferase family. IspD subfamily.

The catalysed reaction is 2-C-methyl-D-erythritol 4-phosphate + CTP + H(+) = 4-CDP-2-C-methyl-D-erythritol + diphosphate. It functions in the pathway isoprenoid biosynthesis; isopentenyl diphosphate biosynthesis via DXP pathway; isopentenyl diphosphate from 1-deoxy-D-xylulose 5-phosphate: step 2/6. In terms of biological role, catalyzes the formation of 4-diphosphocytidyl-2-C-methyl-D-erythritol from CTP and 2-C-methyl-D-erythritol 4-phosphate (MEP). This Haemophilus ducreyi (strain 35000HP / ATCC 700724) protein is 2-C-methyl-D-erythritol 4-phosphate cytidylyltransferase.